The following is a 324-amino-acid chain: Dehydrogenase/reductase SDR family member 7C-A (324 aa).

The signal sequence occupies residues 1–17 (MAVPSVMVLPLLIVVFA). Position 41–65 (41–65 (VITDAVSGMGSECARLFHAGGARLV)) interacts with NAD(+). Position 178 (S178) interacts with substrate. Residue Y191 is the Proton acceptor of the active site.

This sequence belongs to the short-chain dehydrogenases/reductases (SDR) family.

The protein resides in the secreted. Its function is as follows. Putative oxidoreductase. This Danio rerio (Zebrafish) protein is Dehydrogenase/reductase SDR family member 7C-A (dhrs7ca).